A 496-amino-acid chain; its full sequence is Probable CtpA-like serine protease (496 aa).

Over residues 1–16 the composition is skewed to basic and acidic residues; sequence MDDKQHTSSSDDERAE. Residues 1 to 27 form a disordered region; that stretch reads MDDKQHTSSSDDERAEIATSNQDQQTN. Polar residues predominate over residues 18–27; sequence ATSNQDQQTN. The helical transmembrane segment at 39–59 threads the bilayer; it reads FISILIGTILITAVITVVAYI. A PDZ domain is found at 124-206; it reads TKSFNEGVSG…TEVTLTVQRG (83 aa). Active-site charge relay system residues include Ser329, Asp340, and Lys354.

This sequence belongs to the peptidase S41A family.

The protein resides in the cell membrane. This chain is Probable CtpA-like serine protease, found in Staphylococcus aureus (strain bovine RF122 / ET3-1).